A 986-amino-acid polypeptide reads, in one-letter code: Ephrin type-A receptor 4-A (986 aa).

The first 20 residues, 1-20, serve as a signal peptide directing secretion; sequence MAGIVHGILFCGLFGLCWAV. The Extracellular portion of the chain corresponds to 21-547; the sequence is TGSRIYPASE…MIGEGASPTV (527 aa). Residues 30-209 form the Eph LBD domain; sequence EVTLLDSRSV…FYKKCPLTVR (180 aa). 2 Fibronectin type-III domains span residues 328–438 and 439–536; these read PPSA…TNQA and APST…TVPS. N-linked (GlcNAc...) asparagine glycosylation is found at Asn340 and Asn407. Residues 548 to 569 traverse the membrane as a helical segment; the sequence is LLVSVAGSIVLVVILIAAFVIS. The Cytoplasmic segment spans residues 570–986; it reads RRRSKYSKAK…QQIQGRMVPV (417 aa). Residues Tyr595 and Tyr601 each carry the phosphotyrosine; by autocatalysis modification. One can recognise a Protein kinase domain in the interval 620–881; it reads IKIEKVIGVG…QIVSMLDKLI (262 aa). Residues 626-634 and Lys652 each bind ATP; that span reads IGVGEFGEV. Asp745 functions as the Proton acceptor in the catalytic mechanism. 2 positions are modified to phosphotyrosine; by autocatalysis: Tyr778 and Tyr928. Residues 911–975 enclose the SAM domain; sequence SQVASVLDWL…LSSVQGMRTQ (65 aa). Positions 984–986 match the PDZ-binding motif; the sequence is VPV.

It belongs to the protein kinase superfamily. Tyr protein kinase family. Ephrin receptor subfamily.

It localises to the cell membrane. Its subcellular location is the early endosome. It catalyses the reaction L-tyrosyl-[protein] + ATP = O-phospho-L-tyrosyl-[protein] + ADP + H(+). Receptor tyrosine kinase which binds membrane-bound ephrin family ligands residing on adjacent cells, leading to contact-dependent bidirectional signaling into neighboring cells. The signaling pathway downstream of the receptor is referred to as forward signaling while the signaling pathway downstream of the ephrin ligand is referred to as reverse signaling. Highly promiscuous, it has the unique property among Eph receptors to bind and to be physiologically activated by both GPI-anchored ephrin-A and transmembrane ephrin-B ligands including EFNA1 and EFNB3. Upon activation by ephrin ligands, modulates cell morphology and integrin-dependent cell adhesion through regulation of the Rac, Rap and Rho GTPases activity. Plays an important role in the development of the nervous system controlling different steps of axonal guidance including the establishment of the corticospinal projections. This Xenopus laevis (African clawed frog) protein is Ephrin type-A receptor 4-A (epha4-a).